The following is a 138-amino-acid chain: MTKPIAKISLRKNARIGSNKNERRIPKGVIHVQASFNNTIVTVTDVRGRVVSWASAGTSGFRGTRKGTPYAAQAAAFNAIRTLVDQGMQRAEVMIKGPGLGRDAALRAIRRNGILLSFVRDVTPMPHNGCRPPKKRRV.

Belongs to the universal ribosomal protein uS11 family. Part of the 30S ribosomal subunit.

It is found in the plastid. The protein resides in the chloroplast. This Phalaenopsis aphrodite subsp. formosana (Moth orchid) protein is Small ribosomal subunit protein uS11c.